Here is an 886-residue protein sequence, read N- to C-terminus: MWWPYLVLALLSGLEASGFPRSPLRLLGKRSLPEGVVDGVEVYSTKISCKVTSRFAHNVVTTRAVNRADQAKEVSFDVELPKTAFITNFTLTIDGVTYPGNIKEKEVAQKQYDKAVSQGKTAGLVKASGRKLEKFTVSVNVAAGSKVTFELTYEELLKRHKGKYEMYLKVQPKQLVRHFEIDAHIFEPQGISMLDAEASFITNDLLGSALTKSFSGKKGHVSFKPSLDQQRSCPTCTDSLLNGDFTIVYDVNRESPGNVQVVNGYFVHFFAPQGLPVVPKNIVFVIDISGSMAGRKIQQTRVALLKILDDMKQDDYLNFILFSTGVTTWKDSLVQATPANLEEARTFVRSISDQGMTNINDGLLRGIRMLTDAREQHTVPERSTSIIIMLTDGDANTGESRPEKIQENVRKAIEGRFPLYNLGFGNNLNYNFLETMALENHGVARRIYEDSDANLQLQGFYEEVANPLLTNVEVEYPENAILDLTKNSYPHFYDGSETAVAGRLADSDMNNFKADVKGHGALNDLTFTEEVDMKEMDAALKEQGYIFGNYIERLWAYLTIEQLLEKRKNAHGEEKENLTAQALELSLKYHFVTPLTPMVVTKPEDNEDQTSIADKPGEDAPYAATSTAYLTSHQSPPTPYYYVDGDPHFIIQVPGKNDTICFNIDEKPGTVLRLIQDPVTGITVTGQIIGDKGSSPYSRTGKTYFGKLGITHAWMDFRIEVTTEKIILGTEDELSTFSWLDTVTITQTGLFVAINRKKNMVVSFGDGVNFVIVLHQVWKKHPLHQDFLGFYVVDSHRMSARTHGLLGQFFRPFDFEVSDVRPGSDPAKPDATMVVKNHQLTVTRGSQRDYRKDASVGTKVTCWFVHNNGEGLIDGVHTDYIVPSLF.

The N-terminal stretch at Met-1–Gly-18 is a signal peptide. Residues Phe-19–Arg-30 constitute a propeptide that is removed on maturation. Residues Leu-26–Glu-155 enclose the VIT domain. Residue Asn-88 is glycosylated (N-linked (GlcNAc...) asparagine). The VWFA domain maps to Pro-279–Glu-439. Asn-577 is a glycosylation site (N-linked (GlcNAc...) asparagine). At Asp-646 the chain carries Aspartate 1-(chondroitin 4-sulfate)-ester. A propeptide spanning residues Pro-647–Phe-886 is cleaved from the precursor.

This sequence belongs to the ITIH family. I-alpha-I plasma protease inhibitors are assembled from one or two heavy chains (HC) and one light chain, bikunin. Pre-alpha-inhibitor (P-alpha-I) is composed of ITIH3/HC3 and bikunin. Heavy chains are linked to bikunin via chondroitin 4-sulfate esterified to the alpha-carboxyl of the C-terminal aspartate after propeptide cleavage.

Its subcellular location is the secreted. Functionally, may act as a carrier of hyaluronan in serum or as a binding protein between hyaluronan and other matrix protein, including those on cell surfaces in tissues to regulate the localization, synthesis and degradation of hyaluronan which are essential to cells undergoing biological processes. This chain is Inter-alpha-trypsin inhibitor heavy chain H3 (ITIH3), found in Mesocricetus auratus (Golden hamster).